The primary structure comprises 1711 residues: Receptor-type tyrosine-protein phosphatase V (1711 aa).

Residues 1–17 (MRPLILLAALLWLQGFL) form the signal peptide. The Extracellular segment spans residues 18-1074 (AEDDACSSLE…SEPRASISLA (1057 aa)). 10 consecutive Fibronectin type-III domains span residues 37–129 (PLLS…TAPT), 130–222 (VVRG…VPPD), 218–305 (PVPP…EWTY), 306–391 (PSYP…LAES), 393–470 (ALPR…ISGY), 475–569 (PPQS…APPT), 565–654 (PAPP…TGWT), 655–749 (PPSA…IPNE), 744–831 (PLIP…VLSV), and 832–926 (EPGP…SAEA). N-linked (GlcNAc...) asparagine glycans are attached at residues asparagine 42, asparagine 74, asparagine 89, asparagine 117, asparagine 174, asparagine 239, and asparagine 259. Asparagine 431 carries an N-linked (GlcNAc...) asparagine glycan. N-linked (GlcNAc...) asparagine glycosylation is found at asparagine 570, asparagine 620, asparagine 649, asparagine 663, and asparagine 737. N-linked (GlcNAc...) asparagine glycosylation is found at asparagine 851, asparagine 882, asparagine 970, and asparagine 982. The helical transmembrane segment at 1075 to 1095 (IIPLTVMLGAVVGSIVIVCAV) threads the bilayer. The Cytoplasmic segment spans residues 1096–1711 (LCLLRWRCLK…PRAGKWPAPC (616 aa)). Tyrosine-protein phosphatase domains are found at residues 1150–1409 (FFQE…LLNK) and 1427–1696 (DFAQ…LNSA). Substrate contacts are provided by residues aspartate 1316, 1350–1356 (CSAGVGR), and glutamine 1394. Catalysis depends on cysteine 1350, which acts as the Phosphocysteine intermediate.

The protein belongs to the protein-tyrosine phosphatase family. Receptor class 3 subfamily. In terms of processing, the cytoplasmic domain contains potential phosphorylation sites. In terms of tissue distribution, bone and testis. In the latter, restricted to the basal portion of the seminiferous tubule.

The protein resides in the membrane. The enzyme catalyses O-phospho-L-tyrosyl-[protein] + H2O = L-tyrosyl-[protein] + phosphate. Functionally, protein tyrosine phosphatase that acts as a regulator of energy metabolism. Prevents decarboxylation of osteocalcin (Bglap) via an indirect mechanism, preventing the hormone activity of osteocalcin. Functions in signaling pathways during bone remodeling, as well as serve a broader role in cell interactions associated with differentiation in bone and testis. Associated with differentiation in bone and testis. The sequence is that of Receptor-type tyrosine-protein phosphatase V (Ptprv) from Rattus norvegicus (Rat).